Consider the following 107-residue polypeptide: Nucleoid-associated protein Oant_0022 (107 aa).

This sequence belongs to the YbaB/EbfC family. In terms of assembly, homodimer.

The protein localises to the cytoplasm. It is found in the nucleoid. In terms of biological role, binds to DNA and alters its conformation. May be involved in regulation of gene expression, nucleoid organization and DNA protection. The protein is Nucleoid-associated protein Oant_0022 of Brucella anthropi (strain ATCC 49188 / DSM 6882 / CCUG 24695 / JCM 21032 / LMG 3331 / NBRC 15819 / NCTC 12168 / Alc 37) (Ochrobactrum anthropi).